The following is a 325-amino-acid chain: ATP phosphoribosyltransferase (325 aa).

It belongs to the ATP phosphoribosyltransferase family. Long subfamily. Mg(2+) is required as a cofactor.

It localises to the cytoplasm. The enzyme catalyses 1-(5-phospho-beta-D-ribosyl)-ATP + diphosphate = 5-phospho-alpha-D-ribose 1-diphosphate + ATP. It participates in amino-acid biosynthesis; L-histidine biosynthesis; L-histidine from 5-phospho-alpha-D-ribose 1-diphosphate: step 1/9. Feedback inhibited by histidine. Catalyzes the condensation of ATP and 5-phosphoribose 1-diphosphate to form N'-(5'-phosphoribosyl)-ATP (PR-ATP). Has a crucial role in the pathway because the rate of histidine biosynthesis seems to be controlled primarily by regulation of HisG enzymatic activity. The protein is ATP phosphoribosyltransferase of Bradyrhizobium sp. (strain ORS 278).